A 442-amino-acid chain; its full sequence is SPRY domain-containing protein 3 (442 aa).

Residues 17–204 (DLNLHYRFLN…VRLHLNAELG (188 aa)) form the B30.2/SPRY domain. The disordered stretch occupies residues 371–394 (EGEEEEEEEEEEEDGEEIEPEHEG). A compositionally biased stretch (acidic residues) spans 372–390 (GEEEEEEEEEEEDGEEIEP).

This is SPRY domain-containing protein 3 (SPRYD3) from Homo sapiens (Human).